We begin with the raw amino-acid sequence, 489 residues long: Cytochrome P450 monooxygenase tazI (489 aa).

Cys433 is a heme binding site.

Belongs to the cytochrome P450 family. Heme is required as a cofactor.

It participates in secondary metabolite biosynthesis. In terms of biological role, cytochrome P450 monooxygenase; part of the gene cluster that mediates the biosynthesis of azaterrilone A and other azaphilones, a class of fungal metabolites characterized by a highly oxygenated pyrano-quinone bicyclic core and exhibiting a broad range of bioactivities. The first step of the pathway begins with the non-reducing polyketide synthase tazA that assembles one acetyl-CoA starter unit, five malonyl-CoA units, and catalyzes a series of Claisen condensations, methylation, PT-mediated cyclization, and finally releases the first hexaketide precursor through the R-domain. The tazA product then undergoes reduction on its terminal ketone and the following pyran-ring formation by yet undetermined enzyme(s). Dehydration and enoyl reduction, possibly involving the trans-enoyl reductase tazE leads to the next intermediate. TazD is predicted as an acetyltransferase and might catalyze the acetylation steps leading to the synthesis of azaterrilone A. Azaterrilone A is not the final product of the taz pathway and both the highly reducing polyketide synthase tazB and the dual enzyme tazHJ catalyze late steps of the pathway, leading to the production of the 2 final stereoisomers that contain additional polyketide modification whose structures have still to be determined. This chain is Cytochrome P450 monooxygenase tazI, found in Aspergillus terreus (strain NIH 2624 / FGSC A1156).